The following is a 568-amino-acid chain: Potassium-transporting ATPase potassium-binding subunit (568 aa).

Transmembrane regions (helical) follow at residues Thr-3–Gly-23, Leu-68–Val-88, Phe-133–Ile-153, Leu-180–Phe-200, Val-256–Leu-276, Leu-281–Val-301, Phe-375–Ile-395, Ile-421–Phe-441, Ile-497–Leu-517, and Val-535–Pro-555.

It belongs to the KdpA family. The system is composed of three essential subunits: KdpA, KdpB and KdpC.

The protein localises to the cell inner membrane. Its function is as follows. Part of the high-affinity ATP-driven potassium transport (or Kdp) system, which catalyzes the hydrolysis of ATP coupled with the electrogenic transport of potassium into the cytoplasm. This subunit binds the periplasmic potassium ions and delivers the ions to the membrane domain of KdpB through an intramembrane tunnel. The chain is Potassium-transporting ATPase potassium-binding subunit from Phocaeicola vulgatus (strain ATCC 8482 / DSM 1447 / JCM 5826 / CCUG 4940 / NBRC 14291 / NCTC 11154) (Bacteroides vulgatus).